Here is a 1049-residue protein sequence, read N- to C-terminus: RIMS-binding protein 2 (1049 aa).

One can recognise an SH3 1 domain in the interval 164–231 (GKVHLCVARY…PSNFVDFIQD (68 aa)). Fibronectin type-III domains lie at 294-387 (VPYP…GKDV), 390-471 (APSQ…EKDE), and 486-587 (PPQD…VPPA). Disordered stretches follow at residues 580 to 664 (PDLL…VSTT), 694 to 714 (SAGP…EVKR), and 728 to 750 (LGQQ…GSDL). Residues 582–598 (LLVPPAPHPRTAPPPKP) show a composition bias toward pro residues. Over residues 603–616 (MDTKDLGPHVKVDE) the composition is skewed to basic and acidic residues. Residues 641–651 (GPGRRSPSPSR) show a composition bias toward low complexity. Phosphoserine is present on residues Ser-701 and Ser-709. Over residues 735 to 746 (CHGDEYHTESSR) the composition is skewed to basic and acidic residues. 2 positions are modified to phosphoserine: Ser-832 and Ser-839. Residue Thr-841 is modified to Phosphothreonine. 2 SH3 domains span residues 848 to 916 (LPAR…EIHA) and 952 to 1019 (VPTR…EVPD). The segment at 1024-1049 (HLSDAPPHYSHDPPMRTKAKRVSQPP) is disordered. Positions 1040-1049 (TKAKRVSQPP) are enriched in basic residues.

Belongs to the RIMBP family. In terms of assembly, interacts with CACNA1D and CACNA1B, and potentially with other Ca(2+) channel alpha-1 isoforms. Interacts with RIMS1 and RIMS2.

The protein resides in the cell membrane. The protein localises to the synapse. Plays a role in the synaptic transmission as bifunctional linker that interacts simultaneously with RIMS1, RIMS2, CACNA1D and CACNA1B. This Rattus norvegicus (Rat) protein is RIMS-binding protein 2 (Rimbp2).